A 338-amino-acid polypeptide reads, in one-letter code: Glycerol-3-phosphate dehydrogenase [NAD(P)+] (338 aa).

NADPH contacts are provided by serine 13, tryptophan 14, and lysine 108. The sn-glycerol 3-phosphate site is built by lysine 108, glycine 139, and serine 141. Residue alanine 143 coordinates NADPH. Lysine 194, aspartate 247, serine 257, arginine 258, and asparagine 259 together coordinate sn-glycerol 3-phosphate. Lysine 194 (proton acceptor) is an active-site residue. Residue arginine 258 coordinates NADPH. NADPH-binding residues include valine 282 and glutamate 284.

The protein localises to the cytoplasm. It catalyses the reaction sn-glycerol 3-phosphate + NAD(+) = dihydroxyacetone phosphate + NADH + H(+). It carries out the reaction sn-glycerol 3-phosphate + NADP(+) = dihydroxyacetone phosphate + NADPH + H(+). The protein operates within membrane lipid metabolism; glycerophospholipid metabolism. In terms of biological role, catalyzes the reduction of the glycolytic intermediate dihydroxyacetone phosphate (DHAP) to sn-glycerol 3-phosphate (G3P), the key precursor for phospholipid synthesis. This Streptococcus pyogenes serotype M6 (strain ATCC BAA-946 / MGAS10394) protein is Glycerol-3-phosphate dehydrogenase [NAD(P)+].